Reading from the N-terminus, the 364-residue chain is Peroxisomal membrane protein PEX16 (364 aa).

Phosphoserine is present on Ser-200.

The protein belongs to the peroxin-16 family.

It is found in the peroxisome membrane. Its function is as follows. Involved in the biogenesis of peroxisomes. In Schizosaccharomyces pombe (strain 972 / ATCC 24843) (Fission yeast), this protein is Peroxisomal membrane protein PEX16 (pex16).